A 92-amino-acid chain; its full sequence is Acylphosphatase (92 aa).

A disulfide bridge links Cys5 with Cys49. Residues 5 to 92 form the Acylphosphatase-like domain; that stretch reads CIIAWIYGRV…SGELTDFRIR (88 aa). Residues Arg20 and Asn38 contribute to the active site.

This sequence belongs to the acylphosphatase family.

It catalyses the reaction an acyl phosphate + H2O = a carboxylate + phosphate + H(+). In Shigella boydii serotype 4 (strain Sb227), this protein is Acylphosphatase.